The primary structure comprises 72 residues: ATP synthase subunit c (72 aa).

2 helical membrane passes run methionine 1–isoleucine 21 and methionine 48–isoleucine 68.

The protein belongs to the ATPase C chain family. As to quaternary structure, F-type ATPases have 2 components, F(1) - the catalytic core - and F(0) - the membrane proton channel. F(1) has five subunits: alpha(3), beta(3), gamma(1), delta(1), epsilon(1). F(0) has three main subunits: a(1), b(2) and c(10-14). The alpha and beta chains form an alternating ring which encloses part of the gamma chain. F(1) is attached to F(0) by a central stalk formed by the gamma and epsilon chains, while a peripheral stalk is formed by the delta and b chains.

The protein localises to the cell membrane. F(1)F(0) ATP synthase produces ATP from ADP in the presence of a proton or sodium gradient. F-type ATPases consist of two structural domains, F(1) containing the extramembraneous catalytic core and F(0) containing the membrane proton channel, linked together by a central stalk and a peripheral stalk. During catalysis, ATP synthesis in the catalytic domain of F(1) is coupled via a rotary mechanism of the central stalk subunits to proton translocation. Functionally, key component of the F(0) channel; it plays a direct role in translocation across the membrane. A homomeric c-ring of between 10-14 subunits forms the central stalk rotor element with the F(1) delta and epsilon subunits. The sequence is that of ATP synthase subunit c from Bacillus caldotenax.